The following is a 137-amino-acid chain: Transcription antitermination protein NusB (137 aa).

This sequence belongs to the NusB family.

Functionally, involved in transcription antitermination. Required for transcription of ribosomal RNA (rRNA) genes. Binds specifically to the boxA antiterminator sequence of the ribosomal RNA (rrn) operons. This Actinobacillus pleuropneumoniae serotype 5b (strain L20) protein is Transcription antitermination protein NusB.